The following is a 164-amino-acid chain: Peptidyl-prolyl cis-trans isomerase A (164 aa).

At Met-1 the chain carries N-acetylmethionine. Val-2 bears the N-acetylvaline; in Peptidyl-prolyl cis-trans isomerase A, N-terminally processed mark. One can recognise a PPIase cyclophilin-type domain in the interval 7 to 163 (FFDIAVDGEP…KKITIADCGQ (157 aa)). N6-acetyllysine; alternate is present on Lys-28. Lys-28 is covalently cross-linked (Glycyl lysine isopeptide (Lys-Gly) (interchain with G-Cter in SUMO2); alternate). Lys-28 is covalently cross-linked (Glycyl lysine isopeptide (Lys-Gly) (interchain with G-Cter in ubiquitin); alternate). N6-acetyllysine is present on residues Lys-44 and Lys-76. Ser-77 is subject to Phosphoserine. Lys-82 bears the N6-acetyllysine; alternate mark. A Glycyl lysine isopeptide (Lys-Gly) (interchain with G-Cter in SUMO2); alternate cross-link involves residue Lys-82. Thr-93 is modified (phosphothreonine). Residue Asn-108 is glycosylated (N-linked (GlcNAc...) asparagine). N6-acetyllysine occurs at positions 125, 131, and 133.

It belongs to the cyclophilin-type PPIase family. PPIase A subfamily. Interacts with protein phosphatase PPP3CA/calcineurin A. Interacts with isoform 2 of BSG/CD147. Interacts with FOXO1; the interaction promotes FOXO1 dephosphorylation, nuclear accumulation and transcriptional activity. Interacts with integrin ITGA2B:ITGB3; the interaction is ROS and peptidyl-prolyl cis-trans isomerase (PPIase) activity-dependent and is increased in the presence of thrombin. Interacts with MAP3K5. Interacts with TARDBP; the interaction is dependent on the RNA-binding activity of TARDBP and the PPIase activity of PPIA/CYPA and the acetylation of PPIA/CYPA at Lys-125 favors the interaction. Interacts with HNRNPA1, HNRNPA2B1, HNRNPC, RBMX, HNRNPK and HNRNPM. Acetylation at Lys-125 markedly inhibits catalysis of cis to trans isomerization. PPIA acetylation also antagonizes the immunosuppressive effects of cyclosporine by inhibiting the sequential steps of cyclosporine binding and calcineurin inhibition. Acetylation at Lys-125 favors the interaction with TARDBP.

The protein resides in the cytoplasm. Its subcellular location is the secreted. The protein localises to the nucleus. It carries out the reaction [protein]-peptidylproline (omega=180) = [protein]-peptidylproline (omega=0). Its activity is regulated as follows. Binds cyclosporin A (CsA). CsA mediates some of its effects via an inhibitory action on PPIase. Catalyzes the cis-trans isomerization of proline imidic peptide bonds in oligopeptides. Exerts a strong chemotactic effect on leukocytes partly through activation of one of its membrane receptors BSG/CD147, initiating a signaling cascade that culminates in MAPK/ERK activation. Activates endothelial cells (ECs) in a proinflammatory manner by stimulating activation of NF-kappa-B and ERK, JNK and p38 MAP-kinases and by inducing expression of adhesion molecules including SELE and VCAM1. Induces apoptosis in ECs by promoting the FOXO1-dependent expression of CCL2 and BCL2L11 which are involved in EC chemotaxis and apoptosis. In response to oxidative stress, initiates proapoptotic and antiapoptotic signaling in ECs via activation of NF-kappa-B and AKT1 and up-regulation of antiapoptotic protein BCL2. Negatively regulates MAP3K5/ASK1 kinase activity, autophosphorylation and oxidative stress-induced apoptosis mediated by MAP3K5/ASK1. Necessary for the assembly of TARDBP in heterogeneous nuclear ribonucleoprotein (hnRNP) complexes and regulates TARDBP binding to RNA UG repeats and TARDBP-dependent expression of HDAC6, ATG7 and VCP which are involved in clearance of protein aggregates. Plays an important role in platelet activation and aggregation. Regulates calcium mobilization and integrin ITGA2B:ITGB3 bidirectional signaling via increased ROS production as well as by facilitating the interaction between integrin and the cell cytoskeleton. Binds heparan sulfate glycosaminoglycans. The chain is Peptidyl-prolyl cis-trans isomerase A (PPIA) from Saguinus oedipus (Cotton-top tamarin).